Consider the following 1161-residue polypeptide: PAN2-PAN3 deadenylation complex catalytic subunit pan2 (1161 aa).

WD repeat units lie at residues 20–59, 102–145, and 276–315; these read GLPTIATTIAFDDVSELLWAGNEFGRITSFYGPELQRYTS, AHEE…DKLQ, and ANVSFMLGIDISPSGEALAINDAECAIHLWGSPSKVHFNE. Residues 316-452 are linker; the sequence is MSKEVEFADV…GAKLNGEAED (137 aa). Residues 453–822 form the USP domain; sequence DPLLKYSNVE…IPCVLAYQAR (370 aa). Residues 871 to 1049 form the Exonuclease domain; that stretch reads VALDTEFVDL…VEDARMALRL (179 aa). 4 residues coordinate a divalent metal cation: D874, E876, D983, and D1042. Residues 1094–1161 are disordered; the sequence is GTAVTMQNNS…GDFFGGSPLK (68 aa). Polar residues predominate over residues 1097-1110; sequence VTMQNNSGRNTPST. The span at 1116–1129 shows a compositional bias: low complexity; sequence AAAAAATTSAPATP. Gly residues predominate over residues 1145-1155; that stretch reads TFGGPGTGDFF.

The protein belongs to the peptidase C19 family. PAN2 subfamily. In terms of assembly, forms a heterotrimer with an asymmetric homodimer of the regulatory subunit pan3 to form the poly(A)-nuclease (PAN) deadenylation complex. A divalent metal cation serves as cofactor.

The protein resides in the cytoplasm. The enzyme catalyses Exonucleolytic cleavage of poly(A) to 5'-AMP.. With respect to regulation, positively regulated by the regulatory subunit pan3. Its function is as follows. Catalytic subunit of the poly(A)-nuclease (PAN) deadenylation complex, one of two cytoplasmic mRNA deadenylases involved in mRNA turnover. PAN specifically shortens poly(A) tails of RNA and the activity is stimulated by poly(A)-binding protein pab1. PAN deadenylation is followed by rapid degradation of the shortened mRNA tails by the CCR4-NOT complex. Deadenylated mRNAs are then degraded by two alternative mechanisms, namely exosome-mediated 3'-5' exonucleolytic degradation, or deadenylation-dependent mRNA decaping and subsequent 5'-3' exonucleolytic degradation by xrn1. May also be involved in post-transcriptional maturation of mRNA poly(A) tails. This Aspergillus clavatus (strain ATCC 1007 / CBS 513.65 / DSM 816 / NCTC 3887 / NRRL 1 / QM 1276 / 107) protein is PAN2-PAN3 deadenylation complex catalytic subunit pan2.